We begin with the raw amino-acid sequence, 123 residues long: Large ribosomal subunit protein uL29 (123 aa).

This sequence belongs to the universal ribosomal protein uL29 family.

This Babesia bovis protein is Large ribosomal subunit protein uL29 (RPL35).